A 178-amino-acid polypeptide reads, in one-letter code: Large ribosomal subunit protein uL6 (178 aa).

It belongs to the universal ribosomal protein uL6 family. In terms of assembly, part of the 50S ribosomal subunit.

In terms of biological role, this protein binds to the 23S rRNA, and is important in its secondary structure. It is located near the subunit interface in the base of the L7/L12 stalk, and near the tRNA binding site of the peptidyltransferase center. The protein is Large ribosomal subunit protein uL6 of Buchnera aphidicola subsp. Schizaphis graminum (strain Sg).